The primary structure comprises 501 residues: ATP synthase subunit alpha (501 aa).

169–176 contributes to the ATP binding site; the sequence is GDRQTGKT.

It belongs to the ATPase alpha/beta chains family. As to quaternary structure, F-type ATPases have 2 components, CF(1) - the catalytic core - and CF(0) - the membrane proton channel. CF(1) has five subunits: alpha(3), beta(3), gamma(1), delta(1), epsilon(1). CF(0) has three main subunits: a(1), b(2) and c(9-12). The alpha and beta chains form an alternating ring which encloses part of the gamma chain. CF(1) is attached to CF(0) by a central stalk formed by the gamma and epsilon chains, while a peripheral stalk is formed by the delta and b chains.

The protein resides in the cell membrane. It catalyses the reaction ATP + H2O + 4 H(+)(in) = ADP + phosphate + 5 H(+)(out). Produces ATP from ADP in the presence of a proton gradient across the membrane. The alpha chain is a regulatory subunit. This Streptococcus agalactiae serotype Ia (strain ATCC 27591 / A909 / CDC SS700) protein is ATP synthase subunit alpha.